The chain runs to 410 residues: MKQELIERFTRYVKIDTQSNEESHTVPTTPGQIEFGKLLVEELKEIGLSEVTMDEKGYVMATLPANTDKDVPVIGFLAHLDTATDFTGKNVKPQIHENFDGNAITLNEELNVVLTPEQFPELPSYKGHTIITTDGTTLLGADDKAGLTEIMVAMNYLIHNPQIKHGKIRVAFTPDEEIGRGPSHFDVEAFGASFAYTMDGGPLGGLEYESFNAASAKLTFRGTNTHPGTAKNKMRNASKLAMEFDRQLPVEEAPEYTEGYEGFYHLLSLNGDVEQSKAYYIIRDFDRNHFEARKNNIKDIVKNMQEKYGEDAIVLEMNDQYYNMLEKIEPVREIVDIAYEAMKSLNIEPNIHPIRGGTDGSQLSYMGLPTPNIFTGGENYHGKFEYVSVDTMEKAVQVIVEIARRFEEQA.

H79 contributes to the Zn(2+) binding site. The active site involves D81. Residue D142 participates in Zn(2+) binding. The Proton acceptor role is filled by E176. Residues E177, D199, and H381 each contribute to the Zn(2+) site.

This sequence belongs to the peptidase M20B family. Zn(2+) is required as a cofactor.

It localises to the cytoplasm. The enzyme catalyses Release of the N-terminal residue from a tripeptide.. In terms of biological role, cleaves the N-terminal amino acid of tripeptides. The sequence is that of Peptidase T from Bacillus mycoides (strain KBAB4) (Bacillus weihenstephanensis).